We begin with the raw amino-acid sequence, 319 residues long: Tetrahydromethanopterin S-methyltransferase subunit H (319 aa).

It belongs to the MtrH family. As to quaternary structure, the complex is composed of 8 subunits; MtrA, MtrB, MtrC, MtrD, MtrE, MtrF, MtrG and MtrH.

It carries out the reaction 5-methyl-5,6,7,8-tetrahydromethanopterin + coenzyme M + 2 Na(+)(in) = 5,6,7,8-tetrahydromethanopterin + methyl-coenzyme M + 2 Na(+)(out). The protein operates within one-carbon metabolism; methanogenesis from CO(2); methyl-coenzyme M from 5,10-methylene-5,6,7,8-tetrahydromethanopterin: step 2/2. Functionally, part of a complex that catalyzes the formation of methyl-coenzyme M and tetrahydromethanopterin from coenzyme M and methyl-tetrahydromethanopterin. This is an energy-conserving, sodium-ion translocating step. MtrH catalyzes the transfer of the methyl group from methyl-tetrahydromethanopterin to the corrinoid prosthetic group of MtrA. This is Tetrahydromethanopterin S-methyltransferase subunit H from Methanococcus maripaludis (strain DSM 14266 / JCM 13030 / NBRC 101832 / S2 / LL).